The primary structure comprises 596 residues: Pumilio homolog 12 (596 aa).

The PUM-HD domain occupies 254–596 (LNEDLTMSLN…KVLSALSSKK (343 aa)). Pumilio repeat units lie at residues 277–312 (EARGKIYYLAKDQHGCRFLQRIFSEKDGNDIEMIFN), 313–348 (EIIDYISELMMDPFGNYLVQKLLEVCNEDQRMQIVH), 349–388 (SITRKPGLLIKISCDMHGTRAVQKIVETAKREEEISIIIS), 389–424 (ALKHGIVHLIKNVNGNHVVQRCLQYLLPYCGKFLFE), 425–460 (AAITHCVELATDRHGCCVLQKCLGYSEGEQKQHLVS), 461–496 (EIASNALLLSQDPFGNYVLQYVFELQLQWATFEILE), 497–532 (QLEGNYTELSMQKCSSNVVEKCLKLADDKHRARIIR), and 533–570 (ELINYGRLDQVMLDPYGNYVIQAALKQSKGNVHALLVD).

It is found in the cytoplasm. It localises to the nucleus. Its function is as follows. Sequence-specific RNA-binding protein that regulates translation and mRNA stability by binding the 3'-UTR of target mRNAs. The polypeptide is Pumilio homolog 12 (APUM12) (Arabidopsis thaliana (Mouse-ear cress)).